A 364-amino-acid polypeptide reads, in one-letter code: MERGKKKRISNKLQQTFHHSKEPTFLINQAGLLSSDSYSSLSPETESVNPGENIKTDTQKKRPGTVILSKLSSRRIISESQLSPPVIPARRPGFRVCYICGREFGSQSIAIHEPQCLQKWHIENSKLPKHLRRPEPSKPQSLSSSGSYSLQATNEAAFQSAQAQLLPCESCGRTFLPDHLLVHHRSCKPKGEGPRAPHSNSSDHLTGLKKACSGTPARPRTVICYICGKEFGTLSLPIHEPKCLEKWKMENDRLPVELHQPLPQKPQPLPNAQSSQAGPNQAQLVFCPHCSRIFTSDRLLVHQRSCKTHPYGPKYQNLNLGSKGGLKEYTNSKQQRNRAAPSVTDKVIHATQDALGEPGGALCL.

The span at 1-10 (MERGKKKRIS) shows a compositional bias: basic residues. Disordered stretches follow at residues 1 to 21 (MERGKKKRISNKLQQTFHHSK) and 37 to 60 (SYSSLSPETESVNPGENIKTDTQK). The C2HC/C3H-type 1 zinc finger occupies 93-122 (GFRVCYICGREFGSQSIAIHEPQCLQKWHI). Cys97, Cys100, His112, and Cys116 together coordinate Zn(2+). Positions 127-147 (LPKHLRRPEPSKPQSLSSSGS) are disordered. The segment covering 138 to 147 (KPQSLSSSGS) has biased composition (low complexity). 3 C2HC/C3H-type zinc fingers span residues 164–193 (QLLPCESCGRTFLPDHLLVHHRSCKPKGEG), 220–249 (RTVICYICGKEFGTLSLPIHEPKCLEKWKM), and 283–312 (QLVFCPHCSRIFTSDRLLVHQRSCKTHPYG). Positions 168, 171, 183, 187, 224, 227, 239, 243, 287, 290, 302, and 306 each coordinate Zn(2+). The tract at residues 187 to 214 (CKPKGEGPRAPHSNSSDHLTGLKKACSG) is disordered.

The cofactor is Zn(2+).

The chain is Zinc finger protein 474 (ZNF474) from Homo sapiens (Human).